The chain runs to 220 residues: Ribose-5-phosphate isomerase A (220 aa).

Substrate contacts are provided by residues 28–31 (TGST), 81–84 (DGAD), and 94–97 (KGGG). Glu-103 functions as the Proton acceptor in the catalytic mechanism. Lys-121 provides a ligand contact to substrate.

Belongs to the ribose 5-phosphate isomerase family. Homodimer.

The catalysed reaction is aldehydo-D-ribose 5-phosphate = D-ribulose 5-phosphate. The protein operates within carbohydrate degradation; pentose phosphate pathway; D-ribose 5-phosphate from D-ribulose 5-phosphate (non-oxidative stage): step 1/1. Catalyzes the reversible conversion of ribose-5-phosphate to ribulose 5-phosphate. The polypeptide is Ribose-5-phosphate isomerase A (Shewanella sp. (strain W3-18-1)).